The sequence spans 349 residues: Green-sensitive opsin-2 (349 aa).

Over Met-1–Gln-36 the chain is Extracellular. 2 N-linked (GlcNAc...) asparagine glycosylation sites follow: Asn-2 and Asn-15. The helical transmembrane segment at Phe-37–Val-61 threads the bilayer. Residues Thr-62–Asn-73 lie on the Cytoplasmic side of the membrane. A helical transmembrane segment spans residues Tyr-74 to Ile-99. Residues Asn-100–Glu-113 lie on the Extracellular side of the membrane. Cys-110 and Cys-187 form a disulfide bridge. Residues Gly-114 to Ile-133 form a helical membrane-spanning segment. At Glu-134 to His-152 the chain is on the cytoplasmic side. A helical transmembrane segment spans residues Ala-153–Ser-176. Over Arg-177 to Ser-202 the chain is Extracellular. N-linked (GlcNAc...) asparagine glycosylation occurs at Asn-200. The chain crosses the membrane as a helical span at residues Tyr-203–Val-230. Residues Lys-231 to Arg-252 lie on the Cytoplasmic side of the membrane. The chain crosses the membrane as a helical span at residues Met-253–Phe-276. Residues Phe-277–Ser-284 are Extracellular-facing. The chain crosses the membrane as a helical span at residues Ala-285 to Leu-309. N6-(retinylidene)lysine is present on Lys-296. Over Asn-310–Ala-349 the chain is Cytoplasmic. Positions Leu-328–Ala-349 are disordered. Low complexity predominate over residues Ser-334–Ala-349.

The protein belongs to the G-protein coupled receptor 1 family. Opsin subfamily. In terms of processing, phosphorylated on some or all of the serine and threonine residues present in the C-terminal region.

It is found in the membrane. In terms of biological role, visual pigments are the light-absorbing molecules that mediate vision. They consist of an apoprotein, opsin, covalently linked to cis-retinal. The protein is Green-sensitive opsin-2 (opn1mw2) of Danio rerio (Zebrafish).